Reading from the N-terminus, the 96-residue chain is MKFKPLHDRVLIEVLDSSEKTAGGIIIPDTAQEKPQEGKVIAVGGGAKTEDGKLIPMDVKVGDKVLFGKWSGTEIKIDGKEYSIMKESDIMGISGK.

The protein belongs to the GroES chaperonin family. Heptamer of 7 subunits arranged in a ring. Interacts with the chaperonin GroEL.

It localises to the cytoplasm. Its function is as follows. Together with the chaperonin GroEL, plays an essential role in assisting protein folding. The GroEL-GroES system forms a nano-cage that allows encapsulation of the non-native substrate proteins and provides a physical environment optimized to promote and accelerate protein folding. GroES binds to the apical surface of the GroEL ring, thereby capping the opening of the GroEL channel. The protein is Co-chaperonin GroES of Pelagibacter ubique (strain HTCC1062).